We begin with the raw amino-acid sequence, 240 residues long: UDP-2,3-diacylglucosamine hydrolase (240 aa).

Residues D8, H10, D41, N79, and H114 each contribute to the Mn(2+) site. 79–80 provides a ligand contact to substrate; the sequence is NR. Substrate is bound by residues D122, S160, N164, K167, and H195. Residues H195 and H197 each contribute to the Mn(2+) site.

Belongs to the LpxH family. The cofactor is Mn(2+).

The protein resides in the cell inner membrane. It carries out the reaction UDP-2-N,3-O-bis[(3R)-3-hydroxytetradecanoyl]-alpha-D-glucosamine + H2O = 2-N,3-O-bis[(3R)-3-hydroxytetradecanoyl]-alpha-D-glucosaminyl 1-phosphate + UMP + 2 H(+). It participates in glycolipid biosynthesis; lipid IV(A) biosynthesis; lipid IV(A) from (3R)-3-hydroxytetradecanoyl-[acyl-carrier-protein] and UDP-N-acetyl-alpha-D-glucosamine: step 4/6. Functionally, hydrolyzes the pyrophosphate bond of UDP-2,3-diacylglucosamine to yield 2,3-diacylglucosamine 1-phosphate (lipid X) and UMP by catalyzing the attack of water at the alpha-P atom. Involved in the biosynthesis of lipid A, a phosphorylated glycolipid that anchors the lipopolysaccharide to the outer membrane of the cell. The protein is UDP-2,3-diacylglucosamine hydrolase of Salmonella newport (strain SL254).